The primary structure comprises 685 residues: DNA ligase (685 aa).

Residues Asp47–Asp51, Ser96–Leu97, and Glu125 each bind NAD(+). Lys127 (N6-AMP-lysine intermediate) is an active-site residue. Residues Arg148, Glu185, Lys304, and Lys328 each contribute to the NAD(+) site. Residues Cys422, Cys425, Cys440, and Cys446 each contribute to the Zn(2+) site. The BRCT domain occupies Ala605–Ala685.

It belongs to the NAD-dependent DNA ligase family. LigA subfamily. Mg(2+) is required as a cofactor. The cofactor is Mn(2+).

The catalysed reaction is NAD(+) + (deoxyribonucleotide)n-3'-hydroxyl + 5'-phospho-(deoxyribonucleotide)m = (deoxyribonucleotide)n+m + AMP + beta-nicotinamide D-nucleotide.. Functionally, DNA ligase that catalyzes the formation of phosphodiester linkages between 5'-phosphoryl and 3'-hydroxyl groups in double-stranded DNA using NAD as a coenzyme and as the energy source for the reaction. It is essential for DNA replication and repair of damaged DNA. In Shewanella baltica (strain OS223), this protein is DNA ligase.